Reading from the N-terminus, the 173-residue chain is 6,7-dimethyl-8-ribityllumazine synthase (173 aa).

5-amino-6-(D-ribitylamino)uracil is bound by residues F24, 58–60 (ALE), and 82–84 (AVI). 87-88 (ET) is a binding site for (2S)-2-hydroxy-3-oxobutyl phosphate. Catalysis depends on H90, which acts as the Proton donor. 5-amino-6-(D-ribitylamino)uracil is bound at residue N115. R129 contributes to the (2S)-2-hydroxy-3-oxobutyl phosphate binding site. The disordered stretch occupies residues 150 to 173 (TLDQLSDDEEDEEDEDDEDEEERA). Acidic residues predominate over residues 154 to 173 (LSDDEEDEEDEDDEDEEERA).

The protein belongs to the DMRL synthase family.

The enzyme catalyses (2S)-2-hydroxy-3-oxobutyl phosphate + 5-amino-6-(D-ribitylamino)uracil = 6,7-dimethyl-8-(1-D-ribityl)lumazine + phosphate + 2 H2O + H(+). It participates in cofactor biosynthesis; riboflavin biosynthesis; riboflavin from 2-hydroxy-3-oxobutyl phosphate and 5-amino-6-(D-ribitylamino)uracil: step 1/2. Its function is as follows. Catalyzes the formation of 6,7-dimethyl-8-ribityllumazine by condensation of 5-amino-6-(D-ribitylamino)uracil with 3,4-dihydroxy-2-butanone 4-phosphate. This is the penultimate step in the biosynthesis of riboflavin. This chain is 6,7-dimethyl-8-ribityllumazine synthase, found in Burkholderia mallei (strain NCTC 10247).